The primary structure comprises 1838 residues: Type III effector DspE (1838 aa).

Residues 1–12 (MELKSLGTEHKA) are compositionally biased toward basic and acidic residues. Disordered stretches follow at residues 1–72 (MELK…AAHQ), 86–163 (KKFS…PTQQ), 182–264 (MAHP…VATP), 281–300 (LEGT…LKGS), 398–418 (DGKS…KTML), and 1480–1505 (NLAA…SNNR). The segment covering 27-46 (ALQQGSSSSSPQNAAASLAA) has biased composition (low complexity). Residues 91-103 (SAPQGQPGTTHSK) show a composition bias toward polar residues. Over residues 110 to 120 (LLARDDGETQH) the composition is skewed to basic and acidic residues. The segment covering 407 to 418 (GSGTQSHNKTML) has biased composition (polar residues). Over residues 1480 to 1502 (NLAAGSRERSTTSGQFGSTTSAS) the composition is skewed to low complexity.

The protein belongs to the AvrE family. Interacts with the chaperone DspF (DspB/F).

The protein localises to the secreted. It localises to the host cell. With respect to regulation, polyamidoamine dendrimers inhibit channel and virulence activities. In terms of biological role, major virulence factor that may function as a water- and solute-permeable channel dedicated to creating osmotic/water potential perturbation and a water- and nutrient-rich apoplast in which bacteria multiply within the infected plant tissues. Expression in Xenopus oocytes results in inward and outward currents, permeability to water and osmolarity-dependent oocyte swelling and bursting. Acts as a major cell-death inducer during fire blight, a necrotic disease affecting plants of the rosaceous family, and during hypersensitive response (HR) on non-host plants. Essential for pathogenicity on host plants. Contributes quantitatively and in a strain-dependent fashion to HR elicitation in non-host plants such as tobacco. Induces cell death in leaves of apple, a host plant, and tobacco, a non-host plant. Also triggers necrosis in the widely used model, non-host, N.benthamiana and in yeast. Required for the transient multiplication and survival of E.amylovora in non-host A.thaliana leaves. In A.thaliana, triggers electrolyte leakage, activation of defense pathways, reactive oxygen species (ROS) accumulation and cell death. The toxicity of DspE in A.thaliana is associated with an early repression of de novo protein synthesis. The polypeptide is Type III effector DspE (Erwinia amylovora (Fire blight bacteria)).